Reading from the N-terminus, the 317-residue chain is Dehydrogenase/reductase SDR family protein 7-like (317 aa).

The Cytoplasmic segment spans residues 1–10; the sequence is MKNLAERSAG. A helical; Signal-anchor for type II membrane protein transmembrane segment spans residues 11-31; the sequence is SLYWWLLATLFLPIAIPGLVL. The Peroxisomal segment spans residues 32–317; sequence KLLTMMKEQR…KKRAEKLNST (286 aa). 52–76 lines the NAD(+) pocket; that stretch reads LITGASSGLGEALAHSFFLAGCKVV. Substrate is bound at residue Ser-189. Residue Tyr-202 is the Proton acceptor of the active site.

Belongs to the short-chain dehydrogenases/reductases (SDR) family.

Its subcellular location is the peroxisome membrane. Functionally, putative oxidoreductase. The protein is Dehydrogenase/reductase SDR family protein 7-like of Anopheles gambiae (African malaria mosquito).